A 218-amino-acid polypeptide reads, in one-letter code: Eukaryotic translation initiation factor 4E-1 (218 aa).

Positions 1–39 (MAEETDTRPASAGSRGRPAPEDDDREEGEITDLACAPSP) are disordered. Positions 21 to 30 (EDDDREEGEI) are enriched in acidic residues. 2 EIF4G-binding regions span residues 43-46 (HPLE) and 53-89 (FDNPQSKSKQAAWGSSIRPIHTFSTVEEFWGLYNNIN). MRNA is bound by residues 61–66 (KQAAWG), Lys-93, and 111–112 (WE). Cysteines 116 and 154 form a disulfide. The EIF4G-binding stretch occupies residues 137-146 (HTLLAMIGEQ). MRNA contacts are provided by residues 161–166 (RGKQER) and 206–210 (KKMDK).

Belongs to the eukaryotic initiation factor 4E family. EIF4F is a multi-subunit complex, the composition of which varies with external and internal environmental conditions. It is composed of at least EIF4A, EIF4E and EIF4G. EIF4E is also known to interact with other partners. In higher plants two isoforms of EIF4F have been identified, named isoform EIF4F and isoform EIF(iso)4F. Isoform EIF4F has subunits p220 and p26, whereas isoform EIF(iso)4F has subunits p82 and p28. Post-translationally, according to the redox status, the Cys-116-Cys-154 disulfide bridge may have a role in regulating protein function by affecting its ability to bind capped mRNA. In terms of processing, phosphorylated upon oxygen deprivation.

The protein resides in the nucleus. The protein localises to the cytoplasm. Functionally, component of the protein complex eIF4F, which is involved in the recognition of the mRNA cap, ATP-dependent unwinding of 5'-terminal secondary structure and recruitment of mRNA to the ribosome. Recognizes and binds the 7-methylguanosine-containing mRNA cap during an early step in the initiation of protein synthesis and facilitates ribosome binding by inducing the unwinding of the mRNAs secondary structures. In Zea mays (Maize), this protein is Eukaryotic translation initiation factor 4E-1.